The following is a 357-amino-acid chain: SUN domain-containing protein 3 (357 aa).

The Nuclear portion of the chain corresponds to 1–47 (MSGKTKARRAAMFFRRCSEDASGSASGNALLSEDENPDANGVTRSWK). The helical transmembrane segment at 48-64 (IILSTMLTLTFLLVGLL) threads the bilayer. At 65–357 (NHQWLKETDV…RVHGTPGKHI (293 aa)) the chain is on the perinuclear space side. A coiled-coil region spans residues 98–146 (RLRMPKEQLELLKKESQNLENNFRQILFLIEQIDVLKALLRDMKDGMDN). The SUN domain occupies 193 to 354 (GASIIEAGTS…YRFRVHGTPG (162 aa)).

As to quaternary structure, self-associates. Interacts with SYNE1 and SPAG4/SUN4. Proposed to form a spermatogenesis-specific LINC complex with SYNE1 during sperm head formation possibly implicating a SUN domain-based heterotrimer with SPAG4/SUN4 associating with SYNE1.

The protein localises to the membrane. The protein resides in the nucleus envelope. It localises to the nucleus inner membrane. As a probable component of the LINC (LInker of Nucleoskeleton and Cytoskeleton) complex, involved in the connection between the nuclear lamina and the cytoskeleton. The nucleocytoplasmic interactions established by the LINC complex play an important role in the transmission of mechanical forces across the nuclear envelope and in nuclear movement and positioning. May be involved in nuclear remodeling during sperm head formation in spermatogenesis. A probable SUN3:SYNE1 LINC complex may tether spermatid nuclei to posterior cytoskeletal structures such as the manchette. The protein is SUN domain-containing protein 3 (SUN3) of Homo sapiens (Human).